The sequence spans 612 residues: Glutamine--fructose-6-phosphate aminotransferase [isomerizing] (612 aa).

Cys-2 acts as the Nucleophile; for GATase activity in catalysis. The region spanning 2–220 is the Glutamine amidotransferase type-2 domain; the sequence is CGIVGAIRAH…DGDIALLASD (219 aa). 2 consecutive SIS domains span residues 288-428 and 461-602; these read AKSV…VRGL and WAQQ…VDKP. The For Fru-6P isomerization activity role is filled by Lys-607.

As to quaternary structure, homodimer.

Its subcellular location is the cytoplasm. The catalysed reaction is D-fructose 6-phosphate + L-glutamine = D-glucosamine 6-phosphate + L-glutamate. Catalyzes the first step in hexosamine metabolism, converting fructose-6P into glucosamine-6P using glutamine as a nitrogen source. The protein is Glutamine--fructose-6-phosphate aminotransferase [isomerizing] of Neisseria meningitidis serogroup B (strain ATCC BAA-335 / MC58).